The chain runs to 318 residues: Glutathione synthetase (318 aa).

The ATP-grasp domain maps to 133–317; that stretch reads KMYALQFTSV…LGQQVMAWLF (185 aa). 159–215 serves as a coordination point for ATP; sequence VQQQGMAVLKPLGGKGGEGILFLQAGDRNLNSMIEISTQRGQLPVMLQEYLPAAKEG. Residues Glu-288 and Asn-290 each contribute to the Mg(2+) site.

Belongs to the prokaryotic GSH synthase family. The cofactor is Mg(2+). It depends on Mn(2+) as a cofactor.

It catalyses the reaction gamma-L-glutamyl-L-cysteine + glycine + ATP = glutathione + ADP + phosphate + H(+). It functions in the pathway sulfur metabolism; glutathione biosynthesis; glutathione from L-cysteine and L-glutamate: step 2/2. In Thermosynechococcus vestitus (strain NIES-2133 / IAM M-273 / BP-1), this protein is Glutathione synthetase.